Reading from the N-terminus, the 509-residue chain is Cytochrome P450 monooxygenase ORF9 (509 aa).

Transmembrane regions (helical) follow at residues 20–40 and 309–329; these read IYVL…GLIV and LIIA…YYLL. N353 is a glycosylation site (N-linked (GlcNAc...) asparagine). Heme is bound at residue C448.

This sequence belongs to the cytochrome P450 family. Heme serves as cofactor.

The protein localises to the membrane. It participates in sesquiterpene biosynthesis. Cytochrome P450 monooxygenase; part of the gene cluster that mediates the biosynthesis of PR-toxin, a bicyclic sesquiterpene belonging to the eremophilane class and acting as a mycotoxin. The first step of the pathway is catalyzed by the aristolochene synthase which performs the cyclization of trans,trans-farnesyl diphosphate (FPP) to the bicyclic sesquiterpene aristolochene. Following the formation of aristolochene, the non-oxygenated aristolochene is converted to the trioxygenated intermediate eremofortin B, via 7-epi-neopetasone. This conversion appears to involve three enzymes, a hydroxysterol oxidase-like enzyme, the quinone-oxidase prx3 that forms the quinone-type-structure in the bicyclic nucleus of aristolochene with the C8-oxo group and the C-3 hydroxyl group, and the P450 monooxygenase ORF6 that introduces the epoxide at the double bond between carbons 1 and 2. No monoxy or dioxy-intermediates have been reported to be released to the broth, so these three early oxidative reactions may be coupled together. Eremofortin B is further oxidized by another P450 monooxygenase, that introduces a second epoxide between carbons 7 and 11 prior to acetylation to eremofortin A by the acetyltransferase ORF8. The second epoxidation may be performed by a second P450 monooxygenase. After the acetylation step, eremofortin A is converted to eremofortin C and then to PR-toxin. First the conversion of eremofortin A to eremofortin C proceeds by oxidation of the side chain of the molecule at C-12 and is catalyzed by the short-chain oxidoreductase prx1. The cytochrome P450 monooxygenase ORF6 is probably also involved in this step. The primary alcohol formed at C-12 is finally oxidized by the short-chain alcohol dehydrogenase prx4 that forms PR-toxin. The polypeptide is Cytochrome P450 monooxygenase ORF9 (Penicillium roqueforti (strain FM164)).